The primary structure comprises 144 residues: Large ribosomal subunit protein uL15 (144 aa).

The tract at residues 1–57 is disordered; it reads MELNNIKPADGAKKDKRRVGRGIGSGLGKTAGRGHKGQKSRAGGFHKVGFEGGQMPM. A compositionally biased stretch (gly residues) spans 21–31; sequence RGIGSGLGKTA.

It belongs to the universal ribosomal protein uL15 family. In terms of assembly, part of the 50S ribosomal subunit.

In terms of biological role, binds to the 23S rRNA. The protein is Large ribosomal subunit protein uL15 of Thiobacillus denitrificans (strain ATCC 25259 / T1).